A 103-amino-acid polypeptide reads, in one-letter code: Putative protein YmfH (103 aa).

The interval 1–34 (MVNAAQRTRVKVEADNRPSVDTHPPGVQPSPGTG) is disordered. Basic and acidic residues predominate over residues 10–20 (VKVEADNRPSV). The next 2 helical transmembrane spans lie at 42–62 (MLCV…TALF) and 73–93 (GLIT…CFVE).

It is found in the cell inner membrane. The protein is Putative protein YmfH (ymfH) of Escherichia coli (strain K12).